The following is a 247-amino-acid chain: MPNRDMLFSVPIANLGDWTFDERVADVFPDMIQRSVPGYSNIISMIGMLAERFARSNSLVYDLGCSLGAATLSMRRNIHVPDCKIIAVDNSPAMVKRCRGHIDAFRSETPVEVIEADILNIDIKNASMVVLNFTLQFLEPSQRQVLIERIYQGLNPGGVLVLSEKFNFADKDVGELLFNMHLDFKRANGYSELEISQKRSMLENVMLTDSVETHKARLADAGFEHSEIWFQCFNFGSLLAVKAEEKA.

Residues tyrosine 39, 64–66, 89–90, 117–118, asparagine 132, and arginine 199 each bind S-adenosyl-L-methionine; these read GCS, DN, and DI.

This sequence belongs to the class I-like SAM-binding methyltransferase superfamily. Cx-SAM synthase family. As to quaternary structure, homodimer.

It catalyses the reaction prephenate + S-adenosyl-L-methionine = carboxy-S-adenosyl-L-methionine + 3-phenylpyruvate + H2O. Functionally, catalyzes the conversion of S-adenosyl-L-methionine (SAM) to carboxy-S-adenosyl-L-methionine (Cx-SAM). The chain is Carboxy-S-adenosyl-L-methionine synthase from Pectobacterium atrosepticum (strain SCRI 1043 / ATCC BAA-672) (Erwinia carotovora subsp. atroseptica).